We begin with the raw amino-acid sequence, 172 residues long: Nascent polypeptide-associated complex subunit beta (172 aa).

Disordered regions lie at residues K36–K58 and Q142–E172. Over residues T41–P50 the composition is skewed to basic residues. Residues G54 to V119 form the NAC-A/B domain.

It belongs to the NAC-beta family. As to quaternary structure, part of the nascent polypeptide-associated complex (NAC), consisting of EGD2 and EGD1. NAC associates with ribosomes via EGD1.

The protein resides in the cytoplasm. It localises to the nucleus. Component of the nascent polypeptide-associated complex (NAC), a dynamic component of the ribosomal exit tunnel, protecting the emerging polypeptides from interaction with other cytoplasmic proteins to ensure appropriate nascent protein targeting. The NAC complex also promotes mitochondrial protein import by enhancing productive ribosome interactions with the outer mitochondrial membrane and blocks the inappropriate interaction of ribosomes translating non-secretory nascent polypeptides with translocation sites in the membrane of the endoplasmic reticulum. EGD1 may act as a transcription factor that exert a negative effect on the expression of several genes that are transcribed by RNA polymerase II. In Pyricularia oryzae (strain 70-15 / ATCC MYA-4617 / FGSC 8958) (Rice blast fungus), this protein is Nascent polypeptide-associated complex subunit beta (EGD1).